The primary structure comprises 403 residues: Nodal homolog (403 aa).

A signal peptide spans Met1–Gly18. A propeptide spanning residues Val19–Arg278 is cleaved from the precursor. N-linked (GlcNAc...) asparagine glycans are attached at residues Asn68, Asn133, and Asn169. The disordered stretch occupies residues Ala195–His220. Intrachain disulfides connect Cys303-Cys369, Cys332-Cys400, and Cys336-Cys402. Asn341 carries N-linked (GlcNAc...) asparagine glycosylation.

This sequence belongs to the TGF-beta family. In terms of assembly, homodimer; disulfide-linked. Interacts with, and is inhibited by cer1 and gdf10/bmp3b.

The protein localises to the secreted. In terms of biological role, cooperation and regulatory loops of multiple nodals are essential for mesendoderm patterning in early embryos. Essential for mesoderm formation and axial patterning during embryonic development. Activates the activin-like signaling pathway to induce dorsal and ventral mesoderm in animal cap ectoderm. In addition, also dorsalizes ventral marginal zone (VMZ) tissues during gastrulation. Acts in a downstream signaling cascade via cripto and cer1 to mediate cardiogenesis in embryonic mesoderm. Directs the orientation of the left-right axis by driving the left-specific gene cascade in the left lateral plate mesoderm. This is Nodal homolog from Xenopus tropicalis (Western clawed frog).